The chain runs to 358 residues: Polyadenylate-binding protein-interacting protein 11 (358 aa).

The span at 1–19 (MAVVETGAAATAADAGGVV) shows a compositional bias: low complexity. Positions 1 to 45 (MAVVETGAAATAADAGGVVIQPPPSSPPSSMTSQDSGVSSDDQNH) are disordered. Residues 31–41 (MTSQDSGVSSD) show a composition bias toward polar residues. The short motif at 92–102 (KLNPMAEEFVP) is the PAM2-like element. Residues 136–164 (GGYGNENGGFRRKKSFGQGKRRMNARTSM) are disordered. Over residues 145 to 159 (FRRKKSFGQGKRRMN) the composition is skewed to basic residues. The Bipartite nuclear localization signal signature appears at 146–157 (RRKKSFGQGKRR). RRM domains follow at residues 173–248 (RTVY…PSKT) and 270–346 (RTIY…PSKT).

Expressed in cauline leaves, stems, immature siliques and primary inflorescences.

It is found in the nucleus. In Arabidopsis thaliana (Mouse-ear cress), this protein is Polyadenylate-binding protein-interacting protein 11 (CID11).